The following is an 859-amino-acid chain: Protein O-mannosyl-transferase Tmtc1 (859 aa).

Residues 1–22 (MHTPKCRRPSMSATLSHKDLAG) are Cytoplasmic-facing. A helical membrane pass occupies residues 23 to 43 (LAGCSALAFVLYLNTLNAGFV). Topologically, residues 44 to 103 (YDDRRAILANGDVTGARPLANLLRNDFWGTPLVDSGSHGSWRPLCVLSFRLNYLAGGMTP) are extracellular. Residues 104–124 (LGYHLVNVMLHCVATWLVFLV) traverse the membrane as a helical segment. Topologically, residues 125–134 (ARTLLPSRMG) are cytoplasmic. Helical transmembrane passes span 135 to 154 (VLAA…AVAG) and 155 to 174 (LVGR…YLSY). The Cytoplasmic segment spans residues 175–189 (RRHMLNREWGSLILT). A helical membrane pass occupies residues 190-210 (IMLALAALLCKETAITALLLC). The Extracellular portion of the chain corresponds to 211–245 (GLCDVLSPVGRENSDKVCDGSISGLASFNFQRRFR). The chain crosses the membrane as a helical span at residues 246–266 (SLSILGFTLLCGLYCRLSLLP). Over 267–288 (RPSTAFSAADNPTAHESCFWTR) the chain is Cytoplasmic. Residues 289–309 (TLTFLYLPVANFGILLWPQEL) form a helical membrane-spanning segment. Residues 310–328 (SFDWGMEAVSRIRTLWDAR) lie on the Extracellular side of the membrane. A helical transmembrane segment spans residues 329–349 (NILTAGFYGSLVAILWKGSGL). The Cytoplasmic segment spans residues 350 to 422 (RSAASPMDFA…SWTAAPILGT (73 aa)). A helical transmembrane segment spans residues 423-443 (AFLVLPFLPASNLLFYVGFVM). Residues 444-446 (AER) are Extracellular-facing. The helical transmembrane segment at 447–467 (VLYLPSVGYCLLFGLGFGHLW) threads the bilayer. The Cytoplasmic segment spans residues 468–473 (QRVNSS). A helical membrane pass occupies residues 474-493 (WRSRLMLLCGLALLLGVHGV). Over 494–859 (RTFRRNLDWR…RMNVHKHENE (366 aa)) the chain is Extracellular. TPR repeat units lie at residues 518–551 (PKAL…RPTM), 552–585 (ADAH…RPQL), 586–620 (AVAY…EGSG), 632–665 (YTCY…LPLL), 671–704 (AVLH…QPEQ), 705–739 (GAAY…APLE), 740–773 (PSSH…APQD), 774–807 (YTLQ…QPMA), and 808–841 (AHAH…QPGH). The N-linked (GlcNAc...) asparagine glycan is linked to Asn-567. Asn-718 carries an N-linked (GlcNAc...) asparagine glycan.

Belongs to the TMTC family.

It is found in the membrane. The protein resides in the endoplasmic reticulum. It carries out the reaction a di-trans,poly-cis-dolichyl beta-D-mannosyl phosphate + L-seryl-[protein] = 3-O-(alpha-D-mannosyl)-L-seryl-[protein] + a di-trans,poly-cis-dolichyl phosphate + H(+). The catalysed reaction is a di-trans,poly-cis-dolichyl beta-D-mannosyl phosphate + L-threonyl-[protein] = 3-O-(alpha-D-mannosyl)-L-threonyl-[protein] + a di-trans,poly-cis-dolichyl phosphate + H(+). It participates in protein modification; protein glycosylation. Functionally, transfers mannosyl residues to the hydroxyl group of serine or threonine residues. This is Protein O-mannosyl-transferase Tmtc1 from Drosophila melanogaster (Fruit fly).